The primary structure comprises 939 residues: Translation initiation factor IF-2 (939 aa).

The interval 57–274 (RLKPAAPAAP…APTKKNEQKI (218 aa)) is disordered. Basic and acidic residues-rich tracts occupy residues 83–122 (MEPK…KESV) and 129–138 (LEQEPPKEEL). Composition is skewed to polar residues over residues 146 to 158 (ESAS…SNPL) and 170 to 180 (VATTLATQTDA). Positions 208–227 (KRSEEPAPKADRPSLEEART) are enriched in basic and acidic residues. Over residues 252–262 (ARKKKKEKKKP) the composition is skewed to basic residues. The region spanning 438–607 (ERPPVVTIMG…LVQSELLELK (170 aa)) is the tr-type G domain. A G1 region spans residues 447–454 (GHVDHGKT). 447–454 (GHVDHGKT) serves as a coordination point for GTP. A G2 region spans residues 472 to 476 (GITQH). The segment at 493 to 496 (DTPG) is G3. Residues 493–497 (DTPGH) and 547–550 (NKVD) each bind GTP. The G4 stretch occupies residues 547–550 (NKVD). Residues 583 to 585 (SAK) form a G5 region.

Belongs to the TRAFAC class translation factor GTPase superfamily. Classic translation factor GTPase family. IF-2 subfamily.

The protein localises to the cytoplasm. In terms of biological role, one of the essential components for the initiation of protein synthesis. Protects formylmethionyl-tRNA from spontaneous hydrolysis and promotes its binding to the 30S ribosomal subunits. Also involved in the hydrolysis of GTP during the formation of the 70S ribosomal complex. This chain is Translation initiation factor IF-2, found in Wolinella succinogenes (strain ATCC 29543 / DSM 1740 / CCUG 13145 / JCM 31913 / LMG 7466 / NCTC 11488 / FDC 602W) (Vibrio succinogenes).